The primary structure comprises 515 residues: RNA exonuclease NGL2 (515 aa).

Disordered regions lie at residues 1 to 54 (MTQD…SKPI) and 353 to 381 (RDGE…PVPE). The span at 21–34 (EINKSVKDAKHQTN) shows a compositional bias: basic and acidic residues. Residues 40-52 (QHKKKGKKGKKSK) are compositionally biased toward basic residues. Over residues 369 to 381 (KYGKDQPESPVPE) the composition is skewed to basic and acidic residues.

It belongs to the CCR4/nocturin family.

The protein resides in the cytoplasm. It is found in the nucleus. Involved in pre-rRNA processing. Required for the final stage of 3'-end maturation of 5.8S rRNA at site E. The polypeptide is RNA exonuclease NGL2 (NGL2) (Saccharomyces cerevisiae (strain ATCC 204508 / S288c) (Baker's yeast)).